A 129-amino-acid chain; its full sequence is Phosphoribosyl-AMP cyclohydrolase (129 aa).

A Mg(2+)-binding site is contributed by Asp-85. Cys-86 lines the Zn(2+) pocket. Mg(2+) contacts are provided by Asp-87 and Asp-89. Cys-102 and Cys-109 together coordinate Zn(2+).

It belongs to the PRA-CH family. Homodimer. Mg(2+) serves as cofactor. It depends on Zn(2+) as a cofactor.

The protein localises to the cytoplasm. The catalysed reaction is 1-(5-phospho-beta-D-ribosyl)-5'-AMP + H2O = 1-(5-phospho-beta-D-ribosyl)-5-[(5-phospho-beta-D-ribosylamino)methylideneamino]imidazole-4-carboxamide. It functions in the pathway amino-acid biosynthesis; L-histidine biosynthesis; L-histidine from 5-phospho-alpha-D-ribose 1-diphosphate: step 3/9. Its function is as follows. Catalyzes the hydrolysis of the adenine ring of phosphoribosyl-AMP. The sequence is that of Phosphoribosyl-AMP cyclohydrolase from Methanococcus maripaludis (strain C6 / ATCC BAA-1332).